Here is an 83-residue protein sequence, read N- to C-terminus: MSSGGLLLLLGLLTLWAELTPVSSKDLPEICKLPKEPGPCRSYLLYFYYNSVEHKCQTFHYGGCEGNENRFHTIEECKSTCAE.

The N-terminal stretch at 1-24 is a signal peptide; sequence MSSGGLLLLLGLLTLWAELTPVSS. Positions 31–81 constitute a BPTI/Kunitz inhibitor domain; sequence CKLPKEPGPCRSYLLYFYYNSVEHKCQTFHYGGCEGNENRFHTIEECKSTC. Intrachain disulfides connect Cys-31–Cys-81, Cys-40–Cys-64, and Cys-56–Cys-77.

Belongs to the venom Kunitz-type family. Expressed by the venom gland.

The protein localises to the secreted. Functionally, serine protease inhibitor. The chain is Kunitz-type serine protease inhibitor vestiginin-3 from Demansia vestigiata (Lesser black whip snake).